We begin with the raw amino-acid sequence, 157 residues long: DNA-binding protein MNB1B (157 aa).

3 disordered regions span residues 1 to 45 (MKGA…KRAP), 59 to 87 (FKEKNPKNKSVAAVGKAAGDRWKSLSESD), and 109 to 157 (YNKG…DDDE). Composition is skewed to basic and acidic residues over residues 10–27 (AKADAKLAVKSKGAEKPA) and 76–87 (AGDRWKSLSESD). The HMG box DNA-binding region spans 41–110 (PKRAPSAFFV…EYNKAIAAYN (70 aa)). Composition is skewed to acidic residues over residues 124–133 (EEEEEDEEES) and 141–157 (NDEDDEEGSEEDEDDDE). At Ser-149 the chain carries Phosphoserine; by CK2.

As to expression, expressed in all tissues examined.

It is found in the nucleus. Recognizes an AAGG motif at the MNF1-binding site. The protein is DNA-binding protein MNB1B (MNB1B) of Zea mays (Maize).